The chain runs to 95 residues: Large ribosomal subunit protein bL27 (95 aa).

Residues 1–9 (MLKMNLQFF) constitute a propeptide that is removed on maturation.

It belongs to the bacterial ribosomal protein bL27 family. The N-terminus is cleaved by ribosomal processing cysteine protease Prp.

The protein is Large ribosomal subunit protein bL27 of Lachnoclostridium phytofermentans (strain ATCC 700394 / DSM 18823 / ISDg) (Clostridium phytofermentans).